A 465-amino-acid polypeptide reads, in one-letter code: Ribulose bisphosphate carboxylase large chain (465 aa).

Position 4 is an N6,N6,N6-trimethyllysine (lysine 4). Substrate is bound by residues asparagine 113 and threonine 163. Residue lysine 165 is the Proton acceptor of the active site. Lysine 167 contributes to the substrate binding site. Residues lysine 191, aspartate 193, and glutamate 194 each contribute to the Mg(2+) site. Lysine 191 is subject to N6-carboxylysine. Histidine 284 functions as the Proton acceptor in the catalytic mechanism. Positions 285, 317, and 369 each coordinate substrate.

Belongs to the RuBisCO large chain family. Type I subfamily. As to quaternary structure, heterohexadecamer of 8 large chains and 8 small chains; disulfide-linked. The disulfide link is formed within the large subunit homodimers. It depends on Mg(2+) as a cofactor. Post-translationally, the disulfide bond which can form in the large chain dimeric partners within the hexadecamer appears to be associated with oxidative stress and protein turnover.

The protein resides in the plastid. It localises to the chloroplast. The catalysed reaction is 2 (2R)-3-phosphoglycerate + 2 H(+) = D-ribulose 1,5-bisphosphate + CO2 + H2O. The enzyme catalyses D-ribulose 1,5-bisphosphate + O2 = 2-phosphoglycolate + (2R)-3-phosphoglycerate + 2 H(+). Functionally, ruBisCO catalyzes two reactions: the carboxylation of D-ribulose 1,5-bisphosphate, the primary event in carbon dioxide fixation, as well as the oxidative fragmentation of the pentose substrate in the photorespiration process. Both reactions occur simultaneously and in competition at the same active site. This Passiflora quadrangularis (Grenadine) protein is Ribulose bisphosphate carboxylase large chain.